The following is a 236-amino-acid chain: Small ribosomal subunit protein uS3 (236 aa).

The region spanning 39–107 (IREILHKELK…DVVINIVEIR (69 aa)) is the KH type-2 domain. The segment at 213 to 236 (MAQDKRMNEGGGESPSPRSRRDAA) is disordered.

Belongs to the universal ribosomal protein uS3 family. As to quaternary structure, part of the 30S ribosomal subunit. Forms a tight complex with proteins S10 and S14.

Its function is as follows. Binds the lower part of the 30S subunit head. Binds mRNA in the 70S ribosome, positioning it for translation. This is Small ribosomal subunit protein uS3 from Bradyrhizobium sp. (strain ORS 278).